The primary structure comprises 446 residues: MSDYLSVTALTKYIKYKFDQDPHLQSVLLKGELSNFKKHSSGHLYFNLKDNNSVVNAMMFKAQANKLDFNPKEGDEVLIEARVSVYERQGNYQIYVNKMHLDGIGNLYQKLEALKKELKKQGLFDTKHKKEIPRFPKKIAVLTASTGAAIRDIYSTINSRYPLVEQIQISTLVQGKQAKDDIVNKIKYADTLDADVMIVGRGGGSIEDLWNFNEEEVVRAIFEAKTPVISAVGHETDFTLSDFVADVRAATPTQAAVIATPDQVELSQYIKQTELNLSRHIIQIINNKKKHLEHVASYYKFKQPSLLYDQQIQKKDDFERQLNLSITTKLNNALQKVELLTNRINLKDLKQQTLQGIQSRLQLHDSLNKSIINIIDNSKKRLSQRIENLNSLSPSNTMLRGYTIVNKNEQVITSTQSLEKNDEINLQMKDGTVDAIVKKVRCNHNE.

This sequence belongs to the XseA family. In terms of assembly, heterooligomer composed of large and small subunits.

It localises to the cytoplasm. It catalyses the reaction Exonucleolytic cleavage in either 5'- to 3'- or 3'- to 5'-direction to yield nucleoside 5'-phosphates.. Bidirectionally degrades single-stranded DNA into large acid-insoluble oligonucleotides, which are then degraded further into small acid-soluble oligonucleotides. The chain is Exodeoxyribonuclease 7 large subunit from Staphylococcus carnosus (strain TM300).